Reading from the N-terminus, the 43-residue chain is Protein PsbN (43 aa).

Residues alanine 4–tyrosine 24 form a helical membrane-spanning segment.

Belongs to the PsbN family.

The protein localises to the cellular thylakoid membrane. Its function is as follows. May play a role in photosystem I and II biogenesis. The polypeptide is Protein PsbN (Nostoc punctiforme (strain ATCC 29133 / PCC 73102)).